The primary structure comprises 249 residues: tRNA pseudouridine synthase A (249 aa).

Asp-53 acts as the Nucleophile in catalysis. Residue Tyr-111 participates in substrate binding.

The protein belongs to the tRNA pseudouridine synthase TruA family. Homodimer.

It carries out the reaction uridine(38/39/40) in tRNA = pseudouridine(38/39/40) in tRNA. Functionally, formation of pseudouridine at positions 38, 39 and 40 in the anticodon stem and loop of transfer RNAs. The chain is tRNA pseudouridine synthase A from Streptococcus pneumoniae serotype 2 (strain D39 / NCTC 7466).